We begin with the raw amino-acid sequence, 792 residues long: Endonuclease MutS2 (792 aa).

An ATP-binding site is contributed by 335–342 (GPNTGGKT). In terms of domain architecture, Smr spans 717–792 (VDLRGLNLEE…GAGVTIVKLK (76 aa)).

This sequence belongs to the DNA mismatch repair MutS family. MutS2 subfamily. In terms of assembly, homodimer. Binds to stalled ribosomes, contacting rRNA.

Functionally, endonuclease that is involved in the suppression of homologous recombination and thus may have a key role in the control of bacterial genetic diversity. Acts as a ribosome collision sensor, splitting the ribosome into its 2 subunits. Detects stalled/collided 70S ribosomes which it binds and splits by an ATP-hydrolysis driven conformational change. Acts upstream of the ribosome quality control system (RQC), a ribosome-associated complex that mediates the extraction of incompletely synthesized nascent chains from stalled ribosomes and their subsequent degradation. Probably generates substrates for RQC. This chain is Endonuclease MutS2, found in Clostridioides difficile (strain 630) (Peptoclostridium difficile).